Here is a 495-residue protein sequence, read N- to C-terminus: NADP/NAD-dependent aldehyde dehydrogenase PuuC (495 aa).

244–249 contacts NAD(+); sequence GSTRTG. Residues glutamate 267 and cysteine 302 contribute to the active site.

It belongs to the aldehyde dehydrogenase family.

It carries out the reaction an aldehyde + NADP(+) + H2O = a carboxylate + NADPH + 2 H(+). The enzyme catalyses an aldehyde + NAD(+) + H2O = a carboxylate + NADH + 2 H(+). The catalysed reaction is 4-(gamma-L-glutamylamino)butanal + NADP(+) + H2O = 4-(gamma-L-glutamylamino)butanoate + NADPH + 2 H(+). It catalyses the reaction 4-(gamma-L-glutamylamino)butanal + NAD(+) + H2O = 4-(gamma-L-glutamylamino)butanoate + NADH + 2 H(+). The protein operates within amine and polyamine degradation; putrescine degradation; 4-aminobutanoate from putrescine: step 3/4. Lithium ions exhibits the highest inhibition (97%). To a lesser extent (5-20%), potassium, sodium, and ammonium ions also inhibit PuuC activity. Transition metals, such as copper and zinc ions inhibit PuuC activity by more than 90%. The presence of heavy metals (mercury, silver) or sodium hydrogensulfite in the reaction mixture completely inactivate PuuC; in contrast, disulfide reductants such as DTT and 2-mercaptoethanol significantly increase its activity by 75% and 27%, respectively. Functionally, catalyzes the oxidation of 3-hydroxypropionaldehyde (3-HPA) to 3-hydroxypropionic acid (3-HP). It acts preferentially with NAD but can also use NADP. 3-HPA appears to be the most suitable substrate for PuuC followed by isovaleraldehyde, propionaldehyde, butyraldehyde, and valeraldehyde. It might play a role in propionate and/or acetic acid metabolisms. Also involved in the breakdown of putrescine through the oxidation of gamma-Glu-gamma-aminobutyraldehyde to gamma-Glu-gamma-aminobutyrate (gamma-Glu-GABA). The protein is NADP/NAD-dependent aldehyde dehydrogenase PuuC of Escherichia coli (strain K12).